The chain runs to 499 residues: Bestrophin homolog 22 (499 aa).

The next 4 helical transmembrane spans lie at 29–49, 77–97, 235–255, and 267–287; these read WKAVFGQLAVWTAVFLLISCI, IPLTFLLGFFVSFVVARWGSI, LVYPQVIFLAVRIYFMICLIG, and GIDLWLPITTMVQFLVYMGWM. Residues 417–432 are compositionally biased toward basic and acidic residues; the sequence is HNAKHAKQRGLERANS. Disordered stretches follow at residues 417-455 and 474-499; these read HNAKHAKQRGLERANSPDKCLSKMRSRSNGKFRTSANGS and TSNPNQVHPHSIAVFPPEEQQTTSRH.

Belongs to the anion channel-forming bestrophin (TC 1.A.46) family. Calcium-sensitive chloride channel subfamily. In terms of assembly, forms oligomers.

The protein localises to the cell membrane. Functionally, forms chloride channels. This chain is Bestrophin homolog 22 (best-22), found in Caenorhabditis elegans.